Here is a 394-residue protein sequence, read N- to C-terminus: 1-deoxy-D-xylulose 5-phosphate reductoisomerase (394 aa).

NADPH-binding residues include T13, G14, S15, V16, R40, Q41, and N127. 1-deoxy-D-xylulose 5-phosphate is bound at residue K128. E129 provides a ligand contact to NADPH. Position 153 (D153) interacts with Mn(2+). Residues S154, E155, S184, and H207 each contribute to the 1-deoxy-D-xylulose 5-phosphate site. E155 provides a ligand contact to Mn(2+). G213 serves as a coordination point for NADPH. S220, N225, K226, and E229 together coordinate 1-deoxy-D-xylulose 5-phosphate. E229 contributes to the Mn(2+) binding site.

It belongs to the DXR family. The cofactor is Mg(2+). It depends on Mn(2+) as a cofactor.

The enzyme catalyses 2-C-methyl-D-erythritol 4-phosphate + NADP(+) = 1-deoxy-D-xylulose 5-phosphate + NADPH + H(+). It participates in isoprenoid biosynthesis; isopentenyl diphosphate biosynthesis via DXP pathway; isopentenyl diphosphate from 1-deoxy-D-xylulose 5-phosphate: step 1/6. In terms of biological role, catalyzes the NADPH-dependent rearrangement and reduction of 1-deoxy-D-xylulose-5-phosphate (DXP) to 2-C-methyl-D-erythritol 4-phosphate (MEP). The sequence is that of 1-deoxy-D-xylulose 5-phosphate reductoisomerase from Chromobacterium violaceum (strain ATCC 12472 / DSM 30191 / JCM 1249 / CCUG 213 / NBRC 12614 / NCIMB 9131 / NCTC 9757 / MK).